A 256-amino-acid chain; its full sequence is Low molecular mass lipoprotein 3 (256 aa).

The first 17 residues, 1-17 (MKPAIVILCLFVASLYA), serve as a signal peptide directing secretion.

Belongs to the 30 kDa lipoprotein family. Detected in larval hemolymph (at protein level).

The protein resides in the secreted. In Bombyx mori (Silk moth), this protein is Low molecular mass lipoprotein 3.